The sequence spans 156 residues: MNIIEGKLQLIGDERIAIISSRFNHLITDRLVEGAKDCFVRHGGRDDLLDLVLVPGAYEIPFALQKILSQGEYDGICCLGAVIRGSTPHFDYVSAEATKGIANVTLKYGAPVTFGVLTTDSIEQAIERAGTKVGNKGFEAMASLIELINLYRKIGA.

Residues Phe-23, 57 to 59 (AYE), and 81 to 83 (AVI) contribute to the 5-amino-6-(D-ribitylamino)uracil site. (2S)-2-hydroxy-3-oxobutyl phosphate is bound at residue 86 to 87 (ST). His-89 acts as the Proton donor in catalysis. Position 114 (Phe-114) interacts with 5-amino-6-(D-ribitylamino)uracil. Arg-128 contributes to the (2S)-2-hydroxy-3-oxobutyl phosphate binding site.

It belongs to the DMRL synthase family.

It catalyses the reaction (2S)-2-hydroxy-3-oxobutyl phosphate + 5-amino-6-(D-ribitylamino)uracil = 6,7-dimethyl-8-(1-D-ribityl)lumazine + phosphate + 2 H2O + H(+). It participates in cofactor biosynthesis; riboflavin biosynthesis; riboflavin from 2-hydroxy-3-oxobutyl phosphate and 5-amino-6-(D-ribitylamino)uracil: step 1/2. Its function is as follows. Catalyzes the formation of 6,7-dimethyl-8-ribityllumazine by condensation of 5-amino-6-(D-ribitylamino)uracil with 3,4-dihydroxy-2-butanone 4-phosphate. This is the penultimate step in the biosynthesis of riboflavin. The polypeptide is 6,7-dimethyl-8-ribityllumazine synthase (Helicobacter hepaticus (strain ATCC 51449 / 3B1)).